Consider the following 152-residue polypeptide: NADH-quinone oxidoreductase subunit I 1 (152 aa).

4Fe-4S ferredoxin-type domains lie at 53–83 (MKLG…MKSD) and 94–123 (VTYV…LGTG). Residues Cys-63, Cys-66, Cys-69, Cys-73, Cys-103, Cys-106, Cys-109, and Cys-113 each contribute to the [4Fe-4S] cluster site.

It belongs to the complex I 23 kDa subunit family. In terms of assembly, NDH-1 is composed of 14 different subunits. Subunits NuoA, H, J, K, L, M, N constitute the membrane sector of the complex. [4Fe-4S] cluster is required as a cofactor.

Its subcellular location is the cell inner membrane. The enzyme catalyses a quinone + NADH + 5 H(+)(in) = a quinol + NAD(+) + 4 H(+)(out). NDH-1 shuttles electrons from NADH, via FMN and iron-sulfur (Fe-S) centers, to quinones in the respiratory chain. The immediate electron acceptor for the enzyme in this species is believed to be ubiquinone. Couples the redox reaction to proton translocation (for every two electrons transferred, four hydrogen ions are translocated across the cytoplasmic membrane), and thus conserves the redox energy in a proton gradient. The sequence is that of NADH-quinone oxidoreductase subunit I 1 from Koribacter versatilis (strain Ellin345).